Reading from the N-terminus, the 564-residue chain is MAPTLKQAYRRRWWMACTAVVENLFFSAVLLGWASLLIMLKKEGFYSSLCPAENRTNTTQDEQHQWTSCDQQEKMLNLGFTIGSFLLSATTLPLGILMDRFGPRPLRLVGSACFAASCTLMALASRDTEVLSPLIFLALSLNGFAGICLTFTSLTLPNMFGNLRSTFMALMIGSYASSAITFPGIKLIYDAGVPFTVIMFTWSGLACLIFLNCALNWPAEAFPAPEEVDYTKKIKLIGLALDHKVTGDRFYTHVTIVGQRLSQKSPSLEEGADAFISSPDIPGTSEETPEKSVPFRKSLCSPIFLWSLVTMGMTQLRVIFYMGAMNKILEFIVTGGKERETNEQRQKVEETVEFYSSIFGVMQLLCLLTCPLIGYIMDWRIKDCVDAPTEGTLNENASFGDARDGASTKFTRPRYRKVQKLTNAINAFTLTNILLVGFGIACLIKNLHLQLLAFVLHTIVRGFFHSACGGLYAAVFPSNHFGTLTGLQSLISAVFALLQQLLFMAMVGPLHGDPFWVNLGLLLLSFLGFLLPSYLYYYRSRLQREYATNLVDPQKVLNTSKVAT.

Residues 20 to 40 (VVENLFFSAVLLGWASLLIML) traverse the membrane as a helical segment. N-linked (GlcNAc...) asparagine glycans are attached at residues Asn-54 and Asn-57. Helical transmembrane passes span 78-98 (LGFT…GILM), 105-124 (PLRL…MALA), 131-151 (LSPL…CLTF), 165-185 (STFM…FPGI), and 191-211 (AGVP…LIFL). Residues Ser-262 and Ser-267 each carry the phosphoserine modification. Helical transmembrane passes span 303–323 (IFLW…FYMG) and 357–377 (SIFG…GYIM). N-linked (GlcNAc...) asparagine glycosylation is present at Asn-396. Ser-398 is subject to Phosphoserine. A run of 4 helical transmembrane segments spans residues 424 to 444 (AINA…ACLI), 451 to 471 (LLAF…CGGL), 490 to 510 (LISA…VGPL), and 515 to 535 (FWVN…PSYL). A glycan (N-linked (GlcNAc...) asparagine) is linked at Asn-558.

This sequence belongs to the SLC43A transporter (TC 2.A.1.44) family. In terms of tissue distribution, expressed in the kidney cortex as well as liver, pancreas, and skeletal muscle. In kidney expressed in the glomerular tuft (at protein level). Expressed in liver, skeletal muscle and pancreas (at protein level).

The protein resides in the cell membrane. It localises to the apical cell membrane. The protein localises to the endoplasmic reticulum membrane. It carries out the reaction D-leucine(in) = D-leucine(out). The enzyme catalyses L-leucine(in) = L-leucine(out). The catalysed reaction is L-isoleucine(in) = L-isoleucine(out). It catalyses the reaction L-methionine(in) = L-methionine(out). It carries out the reaction L-phenylalanine(in) = L-phenylalanine(out). The enzyme catalyses L-valine(in) = L-valine(out). In terms of biological role, uniport that mediates the transport of neutral amino acids such as L-leucine, L-isoleucine, L-valine, and L-phenylalanine. The transport activity is sodium ions-independent, electroneutral and mediated by a facilitated diffusion. The polypeptide is Large neutral amino acids transporter small subunit 3 (Mus musculus (Mouse)).